The sequence spans 88 residues: Three-finger toxin 3FTx-2 (88 aa).

Residues 1–21 form the signal peptide; it reads MKTLLLTLVVVTIVCLDLGNT. 4 disulfide bridges follow: Cys-27–Cys-48, Cys-41–Cys-66, Cys-70–Cys-81, and Cys-82–Cys-87.

Belongs to the three-finger toxin family. Ancestral subfamily. Orphan group II sub-subfamily. As to expression, expressed by the venom gland.

The protein localises to the secreted. Functionally, binds with low affinity to muscular (alpha-1-beta-1-delta-epsilon/CHRNA1-CHRNB1-CHRND-CHRNE) and very low affinity to neuronal (alpha-7/CHRNA7) nicotinic acetylcholine receptor (nAChR). The protein is Three-finger toxin 3FTx-2 of Micrurus corallinus (Brazilian coral snake).